The primary structure comprises 240 residues: MKKTKRIFTALSHLFSPKWWKKNWQRVVLLFFFAVFALLLIFRFVPIPFSAYMVQQKIANLLQGDFRYQIQYDWVSLENISPNIQLAVISSEDQRFPEHLGFDFEAIQRAIRYNEKSNKGIRGASTISQQTAKNLMLWHGQNWLRKGLEVPATMLLELTWSKKRILEVYLNIAEFGNGIFGVEAASRYYFKKSAKNLSQNEAALLVAVLPNPIIYKVNKPSLLVRKKTSLDFETNGKFRY.

A helical membrane pass occupies residues 27 to 47; the sequence is VVLLFFFAVFALLLIFRFVPI.

Belongs to the glycosyltransferase 51 family.

The protein localises to the cell inner membrane. It catalyses the reaction [GlcNAc-(1-&gt;4)-Mur2Ac(oyl-L-Ala-gamma-D-Glu-L-Lys-D-Ala-D-Ala)](n)-di-trans,octa-cis-undecaprenyl diphosphate + beta-D-GlcNAc-(1-&gt;4)-Mur2Ac(oyl-L-Ala-gamma-D-Glu-L-Lys-D-Ala-D-Ala)-di-trans,octa-cis-undecaprenyl diphosphate = [GlcNAc-(1-&gt;4)-Mur2Ac(oyl-L-Ala-gamma-D-Glu-L-Lys-D-Ala-D-Ala)](n+1)-di-trans,octa-cis-undecaprenyl diphosphate + di-trans,octa-cis-undecaprenyl diphosphate + H(+). It functions in the pathway cell wall biogenesis; peptidoglycan biosynthesis. Peptidoglycan polymerase that catalyzes glycan chain elongation from lipid-linked precursors. In Haemophilus influenzae (strain PittEE), this protein is Biosynthetic peptidoglycan transglycosylase.